Reading from the N-terminus, the 318-residue chain is 1-aminocyclopropane-1-carboxylate oxidase (318 aa).

Positions 153-253 (PNFGTKVANY…RMSIASFYNP (101 aa)) constitute a Fe2OG dioxygenase domain. Fe cation contacts are provided by His177, Asp179, and His234.

The protein belongs to the iron/ascorbate-dependent oxidoreductase family. The cofactor is Fe cation.

It catalyses the reaction 1-aminocyclopropane-1-carboxylate + L-ascorbate + O2 = ethene + L-dehydroascorbate + hydrogen cyanide + CO2 + 2 H2O. It participates in alkene biosynthesis; ethylene biosynthesis via S-adenosyl-L-methionine; ethylene from S-adenosyl-L-methionine: step 2/2. This Diospyros kaki (Kaki persimmon) protein is 1-aminocyclopropane-1-carboxylate oxidase (DK-ACO1).